Here is a 325-residue protein sequence, read N- to C-terminus: tRNA pseudouridine synthase B (325 aa).

Asp49 serves as the catalytic Nucleophile.

This sequence belongs to the pseudouridine synthase TruB family. Type 1 subfamily.

The catalysed reaction is uridine(55) in tRNA = pseudouridine(55) in tRNA. Functionally, responsible for synthesis of pseudouridine from uracil-55 in the psi GC loop of transfer RNAs. This Mesorhizobium japonicum (strain LMG 29417 / CECT 9101 / MAFF 303099) (Mesorhizobium loti (strain MAFF 303099)) protein is tRNA pseudouridine synthase B.